Consider the following 120-residue polypeptide: Large ribosomal subunit protein bL12 (120 aa).

It belongs to the bacterial ribosomal protein bL12 family. Homodimer. Part of the ribosomal stalk of the 50S ribosomal subunit. Forms a multimeric L10(L12)X complex, where L10 forms an elongated spine to which 2 to 4 L12 dimers bind in a sequential fashion. Binds GTP-bound translation factors.

Its function is as follows. Forms part of the ribosomal stalk which helps the ribosome interact with GTP-bound translation factors. Is thus essential for accurate translation. The polypeptide is Large ribosomal subunit protein bL12 (Lachnoclostridium phytofermentans (strain ATCC 700394 / DSM 18823 / ISDg) (Clostridium phytofermentans)).